The sequence spans 425 residues: Glutamate-1-semialdehyde 2,1-aminomutase (425 aa).

Lys-265 bears the N6-(pyridoxal phosphate)lysine mark.

This sequence belongs to the class-III pyridoxal-phosphate-dependent aminotransferase family. HemL subfamily. As to quaternary structure, homodimer. Requires pyridoxal 5'-phosphate as cofactor.

The protein localises to the cytoplasm. The catalysed reaction is (S)-4-amino-5-oxopentanoate = 5-aminolevulinate. It participates in porphyrin-containing compound metabolism; protoporphyrin-IX biosynthesis; 5-aminolevulinate from L-glutamyl-tRNA(Glu): step 2/2. The protein is Glutamate-1-semialdehyde 2,1-aminomutase of Thiobacillus denitrificans (strain ATCC 25259 / T1).